The primary structure comprises 473 residues: Photosystem II CP43 reaction center protein (473 aa).

Residues 1-14 constitute a propeptide that is removed on maturation; the sequence is MKTLYSLRRFYPVE. N-acetylthreonine is present on threonine 15. Residue threonine 15 is modified to Phosphothreonine. The next 5 helical transmembrane spans lie at 69-93, 134-155, 178-200, 255-275, and 291-312; these read LFEV…PHLA, LLGP…KDRN, KALY…RRIT, KPFA…LSYS, and WFNN…ASQA. Residue glutamate 367 coordinates [CaMn4O5] cluster. Residues 447–471 form a helical membrane-spanning segment; it reads RARAAAAGFEKGIDRDFEPVLSMTP.

This sequence belongs to the PsbB/PsbC family. PsbC subfamily. PSII is composed of 1 copy each of membrane proteins PsbA, PsbB, PsbC, PsbD, PsbE, PsbF, PsbH, PsbI, PsbJ, PsbK, PsbL, PsbM, PsbT, PsbX, PsbY, PsbZ, Psb30/Ycf12, at least 3 peripheral proteins of the oxygen-evolving complex and a large number of cofactors. It forms dimeric complexes. Requires Binds multiple chlorophylls and provides some of the ligands for the Ca-4Mn-5O cluster of the oxygen-evolving complex. It may also provide a ligand for a Cl- that is required for oxygen evolution. PSII binds additional chlorophylls, carotenoids and specific lipids. as cofactor.

The protein resides in the plastid. The protein localises to the chloroplast thylakoid membrane. In terms of biological role, one of the components of the core complex of photosystem II (PSII). It binds chlorophyll and helps catalyze the primary light-induced photochemical processes of PSII. PSII is a light-driven water:plastoquinone oxidoreductase, using light energy to abstract electrons from H(2)O, generating O(2) and a proton gradient subsequently used for ATP formation. The protein is Photosystem II CP43 reaction center protein of Illicium oligandrum (Star anise).